Reading from the N-terminus, the 2151-residue chain is Polycystin-1-like protein 3 (2151 aa).

The N-terminal stretch at 1 to 20 (MLLQRRSWLWLYIRIGVILG) is a signal peptide. The Extracellular portion of the chain corresponds to 25–1073 (RKPSIREQHG…IKLLLHVTNN (1049 aa)). Positions 34 to 142 (GGNSCYQLNR…CIEKHHFICQ (109 aa)) constitute a C-type lectin domain. 2 cysteine pairs are disulfide-bonded: Cys-55–Cys-141 and Cys-116–Cys-133. N-linked (GlcNAc...) asparagine glycosylation occurs at Asn-89. Residues 222–245 (SLTGRPQVTSDTLASSSPPQGTSD) are compositionally biased toward polar residues. Residues 222 to 609 (SLTGRPQVTS…SSSPPWPVIT (388 aa)) form a disordered region. The segment covering 246–348 (TPASSSPPQV…ASSSPPQGTS (103 aa)) has biased composition (low complexity). Polar residues-rich tracts occupy residues 349-363 (DTPA…TLDT) and 371-600 (QGTS…TPAS). Residues Asn-566, Asn-579, Asn-592, Asn-913, and Asn-951 are each glycosylated (N-linked (GlcNAc...) asparagine). Residues 899 to 1061 (TSLNTSTDHF…FIVPRTVDVE (163 aa)) enclose the GAIN-B domain. Disulfide bonds link Cys-1011-Cys-1039 and Cys-1026-Cys-1041. The GPS stretch occupies residues 1011-1061 (CYFWDRYNRTWKSDGCQVGPKSTILKTQCLCDHLTFFSSDFFIVPRTVDVE). The segment at 1045–1061 (TFFSSDFFIVPRTVDVE) is stachel. The chain crosses the membrane as a helical span at residues 1074–1094 (PVGVSLLSSLLGFYILLAMWA). At 1095–1283 (SRKDREDMQK…NQFTRVQRLS (189 aa)) the chain is on the cytoplasmic side. Positions 1119–1236 (SHYLIQVYTG…GNCERDRVFT (118 aa)) constitute a PLAT domain. The helical transmembrane segment at 1284 to 1304 (CCMALLLCDMVINIMFWKMGG) threads the bilayer. At 1305-1320 (TTAKRGTEQLGPLAVT) the chain is on the extracellular side. Residues 1321–1341 (LSELLVSIQTSIILFPIHLIF) form a helical membrane-spanning segment. Topologically, residues 1342-1533 (GRLFQLIHPP…FCLFRWLKCS (192 aa)) are cytoplasmic. The helical transmembrane segment at 1534–1554 (CWLLLGVISLASAFFITLYSL) threads the bilayer. Residues 1555–1575 (ELDKDQATSWVISMMLSVLQD) are Extracellular-facing. The helical transmembrane segment at 1576 to 1596 (IFISQPIKVIFLTLLFSLMAN) threads the bilayer. The Cytoplasmic segment spans residues 1597-1665 (HMPWLNKDKE…KLTGGTLVQI (69 aa)). The helical transmembrane segment at 1666–1676 (LFLTLLMTTVY) threads the bilayer. Residues 1677–1892 (SAKDSSRFFL…SLTSLQSSER (216 aa)) lie on the Extracellular side of the membrane. Residues Asn-1712 and Asn-1822 are each glycosylated (N-linked (GlcNAc) asparagine). Residues 1893 to 1921 (GFAWIVSQVVYYLLVCYYAFIQGCRLKRQ) traverse the membrane as a helical segment. The Cytoplasmic portion of the chain corresponds to 1922 to 1930 (RLAFFTRKR). Residues 1931–1949 (NLLDTSIVLISFSILGLSM) traverse the membrane as a helical segment. The Extracellular portion of the chain corresponds to 1950–1980 (QSLSLLHKKMQQYHCDRDRFISFYEALRVNS). Residues 1981-2002 (AVTHLRGFLLLFATVRVWDLLR) traverse the membrane as a helical segment. Residues 2003–2019 (HHAQLQVINKTLSKAWD) lie on the Cytoplasmic side of the membrane. A helical transmembrane segment spans residues 2020–2044 (EVLGFILIIVVLLSSYAMTFNLLFG). Residues 2043-2081 (FGWSISDYQSFFRSIVTVVGLLMGTSKHKEVIALYPILG) form a channel pore-region region. Topologically, residues 2045–2077 (WSISDYQSFFRSIVTVVGLLMGTSKHKEVIALY) are extracellular. A helical transmembrane segment spans residues 2078 to 2097 (PILGSLLVLSSIILMGLVII). The Cytoplasmic segment spans residues 2098–2151 (NLFVSAILIAFGKERKACEKEATLTDMLLQKLSSLLGIRLHQNPSEEHADNTGY).

It belongs to the polycystin family. As to quaternary structure, heterotetramer with PKD2L1, composed of 3 subunit of PKD2L1 and 1 subunit of PKD1L3. Post-translationally, autoproteolytically processed at the GPS region of the GAIN-B domain; this cleavage modulates receptor activity. As to expression, expressed in a subset of taste receptor cells (type III taste cells) distinct from those involved in bitter, sweet and umami taste. Expressed in circumvallate and foliate taste buds, but not in surrounding non-gustatory lingual epithelium cells. Expressed in testis.

The protein localises to the cell membrane. It carries out the reaction Ca(2+)(in) = Ca(2+)(out). The catalysed reaction is Na(+)(in) = Na(+)(out). The enzyme catalyses K(+)(in) = K(+)(out). It catalyses the reaction Mg(2+)(in) = Mg(2+)(out). Its activity is regulated as follows. The non-selective cation channel is gated following an off-response property by acid: gated open after the removal of acid stimulus, but not during acid application. Non-selective cation channel activity is inhibited by capsaicin. Regulation of non-selective cation channel activity by external Ca(2+) is bimodal, first sensitizing and subsequently inactivating the current. The apo (closed) heterotetramer has an asymmetric selectivity filter (SF) guarded by Lys-2069 in absence of Ca(2+). However, Ca(2+)-entrance to the SF vestibule is accompanied by a swing motion of Lys-2069 on PKD1L3. Pore-forming subunit of a heterotetrameric, non-selective cation channel that is permeable to Ca(2+). Also shows permeability towards NA(1+), K(+) and Mg(2+). Heterotetrameric complex channel is activated by external low pH and Ca(2+), but opens only when the extracellular pH rises again and after the removal of acid stimulus. May act as a sour taste receptor in gustatory cells; however, its contribution to sour taste perception is unclear in vivo and may be indirect. The polypeptide is Polycystin-1-like protein 3 (Mus musculus (Mouse)).